Reading from the N-terminus, the 561-residue chain is Acylcarnitine hydrolase (561 aa).

The signal sequence occupies residues 1-26 (MARKQPHSWLNAVLFGLLLILIHVWG). Cysteine 97 and cysteine 125 form a disulfide bridge. Residue serine 230 is the Acyl-ester intermediate of the active site. A disulfide bond links cysteine 282 and cysteine 293. Residues glutamate 347 and histidine 459 each act as charge relay system in the active site.

This sequence belongs to the type-B carboxylesterase/lipase family. As to expression, expressed in liver, stomach and kidney.

It localises to the microsome. Its subcellular location is the endoplasmic reticulum. It catalyses the reaction all-trans-retinyl hexadecanoate + H2O = all-trans-retinol + hexadecanoate + H(+). The enzyme catalyses an O-acyl-(R)-carnitine + H2O = (R)-carnitine + a fatty acid + H(+). Functionally, hydrolase with high activity towards palmitoylcarnitine. Is also active with p-nitrophenylacetate and alpha-naphthylacetate. May also hydrolyze retinyl esters. This chain is Acylcarnitine hydrolase, found in Rattus norvegicus (Rat).